Consider the following 265-residue polypeptide: Hydroxyethylthiazole kinase (265 aa).

Methionine 44 serves as a coordination point for substrate. ATP is bound by residues lysine 120 and threonine 166. Glycine 193 lines the substrate pocket.

This sequence belongs to the Thz kinase family. The cofactor is Mg(2+).

It catalyses the reaction 5-(2-hydroxyethyl)-4-methylthiazole + ATP = 4-methyl-5-(2-phosphooxyethyl)-thiazole + ADP + H(+). It functions in the pathway cofactor biosynthesis; thiamine diphosphate biosynthesis; 4-methyl-5-(2-phosphoethyl)-thiazole from 5-(2-hydroxyethyl)-4-methylthiazole: step 1/1. In terms of biological role, catalyzes the phosphorylation of the hydroxyl group of 4-methyl-5-beta-hydroxyethylthiazole (THZ). The sequence is that of Hydroxyethylthiazole kinase from Clostridium novyi (strain NT).